Consider the following 31-residue polypeptide: Photosystem II reaction center protein T (31 aa).

A helical transmembrane segment spans residues 3–23; that stretch reads SFAYILILTLAIATLFFAIAF.

Belongs to the PsbT family. As to quaternary structure, PSII is composed of 1 copy each of membrane proteins PsbA, PsbB, PsbC, PsbD, PsbE, PsbF, PsbH, PsbI, PsbJ, PsbK, PsbL, PsbM, PsbT, PsbX, PsbY, PsbZ, Psb30/Ycf12, peripheral proteins PsbO, CyanoQ (PsbQ), PsbU, PsbV and a large number of cofactors. It forms dimeric complexes.

It localises to the cellular thylakoid membrane. Its function is as follows. Found at the monomer-monomer interface of the photosystem II (PS II) dimer, plays a role in assembly and dimerization of PSII. PSII is a light-driven water plastoquinone oxidoreductase, using light energy to abstract electrons from H(2)O, generating a proton gradient subsequently used for ATP formation. The sequence is that of Photosystem II reaction center protein T from Synechococcus sp. (strain WH7803).